Consider the following 297-residue polypeptide: 4-hydroxy-tetrahydrodipicolinate synthase (297 aa).

A pyruvate-binding site is contributed by threonine 47. Tyrosine 135 functions as the Proton donor/acceptor in the catalytic mechanism. Lysine 163 serves as the catalytic Schiff-base intermediate with substrate. Residue isoleucine 205 coordinates pyruvate.

This sequence belongs to the DapA family. In terms of assembly, homotetramer; dimer of dimers.

It localises to the cytoplasm. It carries out the reaction L-aspartate 4-semialdehyde + pyruvate = (2S,4S)-4-hydroxy-2,3,4,5-tetrahydrodipicolinate + H2O + H(+). Its pathway is amino-acid biosynthesis; L-lysine biosynthesis via DAP pathway; (S)-tetrahydrodipicolinate from L-aspartate: step 3/4. In terms of biological role, catalyzes the condensation of (S)-aspartate-beta-semialdehyde [(S)-ASA] and pyruvate to 4-hydroxy-tetrahydrodipicolinate (HTPA). In Dehalococcoides mccartyi (strain ATCC BAA-2266 / KCTC 15142 / 195) (Dehalococcoides ethenogenes (strain 195)), this protein is 4-hydroxy-tetrahydrodipicolinate synthase.